A 305-amino-acid polypeptide reads, in one-letter code: uncharacterized protein (305 aa).

The N-terminal stretch at 1–29 (MKKWFSSISKKKVSFSTLLLLGSGIVLSS) is a signal peptide. Residue Cys30 is the site of N-palmitoyl cysteine attachment. Cys30 carries the S-diacylglycerol cysteine lipid modification. The tract at residues 234–265 (FYNPDNSNGSNAPGSNQPNQDSGNNGSTTPAA) is disordered. The span at 237-258 (PDNSNGSNAPGSNQPNQDSGNN) shows a compositional bias: polar residues.

The protein resides in the cell membrane. This is an uncharacterized protein from Mycoplasma pneumoniae (strain ATCC 29342 / M129 / Subtype 1) (Mycoplasmoides pneumoniae).